The following is a 511-amino-acid chain: Inositol-3-phosphate synthase isozyme 1 (511 aa).

Positions 71, 72, 73, 74, 144, 181, 191, 194, 231, 232, 233, 234, 282, 283, 307, 310, 341, 342, 343, 356, 394, 395, 423, and 424 each coordinate NAD(+).

The protein belongs to the myo-inositol 1-phosphate synthase family. In terms of assembly, homotrimer or homotetramer. Interacts with ATXR5 and ATXR6. NAD(+) is required as a cofactor. Expressed in siliques, leaves, roots, seed endosperm, but not in embryos. Highest expression in leaves, but restricted to vascular tissue in older leaves.

Its subcellular location is the cytoplasm. The protein resides in the cytosol. It is found in the nucleus. The enzyme catalyses D-glucose 6-phosphate = 1D-myo-inositol 3-phosphate. It participates in polyol metabolism; myo-inositol biosynthesis; myo-inositol from D-glucose 6-phosphate: step 1/2. In terms of biological role, key enzyme in myo-inositol biosynthesis pathway that catalyzes the conversion of glucose 6-phosphate to 1-myo-inositol 1-phosphate in a NAD-dependent manner. Catalyzes the majority of myo-inositol synthesis required for plant growth and development. Acts as a repressor of programmed cell death and protects plant cells against cell death under high light intensity or long days. Controls its own transcription by inhibiting ATXR6 activity. Reduces the deposition of inhibitory histone marks on its own promoter. This is Inositol-3-phosphate synthase isozyme 1 (IPS1) from Arabidopsis thaliana (Mouse-ear cress).